A 276-amino-acid chain; its full sequence is Type II pantothenate kinase (276 aa).

8–15 (DAGGTLTK) is an ATP binding site. The active-site Proton acceptor is the E76. ATP contacts are provided by residues T105, 127–131 (GGTIM), F143, and S230.

This sequence belongs to the type II pantothenate kinase family. As to quaternary structure, homodimer.

It is found in the cytoplasm. It catalyses the reaction (R)-pantothenate + ATP = (R)-4'-phosphopantothenate + ADP + H(+). Its pathway is cofactor biosynthesis; coenzyme A biosynthesis; CoA from (R)-pantothenate: step 1/5. Its function is as follows. Catalyzes the phosphorylation of pantothenate (Pan), the first step in CoA biosynthesis. In Bacillus cereus (strain ATCC 10987 / NRS 248), this protein is Type II pantothenate kinase.